Here is a 282-residue protein sequence, read N- to C-terminus: Non-selective voltage-gated ion channel VDAC2 (282 aa).

Ala1 bears the N-acetylalanine mark. A run of 19 beta stranded transmembrane segments spans residues 25-34 (LVKLDVKTKS), 38-46 (VEFTTSGTS), 53-63 (VNGSLETKYKW), 68-75 (LTFTEKWN), 79-88 (TLGTEIAIED), 94-103 (LKLTFDTTFS), 110-119 (SGKVKAAYKQ), 122-129 (VNLGCDVD), 136-144 (AIHGSAVVG), 149-157 (LAGYQMTFD), 162-174 (KLTK…GYKT), 177-184 (FQLHTNVN), 188-197 (EFAGSIYQKV), 201-210 (METAVNLAWT), 217-226 (RFGIAAKYQL), 230-237 (AAISAKVN), 241-250 (LVGVGYTQTL), 253-262 (GVKLTLSALV), and 272-281 (HKLGLGLELE). NAD(+)-binding positions include 241 to 243 (LVG) and 259 to 263 (SALVD).

Belongs to the eukaryotic mitochondrial porin family. Monomer, homodimer and higher order oligomers; formation of higher order structures is necessary for scramblase activity. In terms of tissue distribution, expressed in skeletal muscle and oocytes.

It is found in the mitochondrion outer membrane. The protein localises to the membrane. It catalyses the reaction chloride(in) = chloride(out). The catalysed reaction is K(+)(in) = K(+)(out). The enzyme catalyses a 1,2-diacyl-sn-glycero-3-phospho-L-serine(in) = a 1,2-diacyl-sn-glycero-3-phospho-L-serine(out). It carries out the reaction a 1,2-diacyl-sn-glycero-3-phosphocholine(in) = a 1,2-diacyl-sn-glycero-3-phosphocholine(out). It catalyses the reaction a 1,2-diacyl-sn-glycero-3-phospho-(1D-myo-inositol)(in) = a 1,2-diacyl-sn-glycero-3-phospho-(1D-myo-inositol)(out). Its function is as follows. Non-selective voltage-gated ion channel that mediates the transport of anions and cations through the mitochondrion outer membrane and plasma membrane. The channel adopts an open conformation at zero mV and a closed conformation at both positive and negative potentials. There are two populations of channels; the main that functions in a lower open-state conductance with lower ion selectivity, that switch, in a voltage-dependent manner, from the open to a low-conducting 'closed' state and the other that has a normal ion selectivity in the typical high conductance, 'open' state. Functionally, catalyzes the scrambling of phospholipids across the outer mitochondrial membrane; the mechanism is unrelated to channel activity and is capable of translocating both anionic and zwitterionic phospholipids. This is Non-selective voltage-gated ion channel VDAC2 from Xenopus laevis (African clawed frog).